The following is a 257-amino-acid chain: ECF RNA polymerase sigma factor SigE (257 aa).

A sigma-70 factor domain-2 region spans residues 87–153; it reads MPSWDELVRQ…RITTNLFLDM (67 aa). A Polymerase core binding motif is present at residues 111–114; that stretch reads NQHD. The interval 186–236 is sigma-70 factor domain-4; that stretch reads SRLGADLQAALDSLPPEFRAAVVLCDIEGLSYEEIGATLGVKLGTVRSRIH. The H-T-H motif DNA-binding region spans 211-230; that stretch reads DIEGLSYEEIGATLGVKLGT.

Belongs to the sigma-70 factor family. ECF subfamily. As to quaternary structure, interacts transiently with the RNA polymerase catalytic core formed by RpoA, RpoB, RpoC and RpoZ (2 alpha, 1 beta, 1 beta' and 1 omega subunit) to form the RNA polymerase holoenzyme that can initiate transcription. Interacts (via sigma-70 factor domain 4) with RseA; interaction is abrogated by treatment of cells with H(2)O(2) or detergent.

Sigma factors are initiation factors that promote the attachment of RNA polymerase to specific initiation sites and are then released. Extracytoplasmic function (ECF) sigma factors are held in an inactive form by an anti-sigma factor until released. In Mycolicibacterium smegmatis (strain ATCC 700084 / mc(2)155) (Mycobacterium smegmatis), this protein is ECF RNA polymerase sigma factor SigE (sigE).